We begin with the raw amino-acid sequence, 962 residues long: Glutamate receptor 1 (962 aa).

A signal peptide spans 1 to 25 (MFSSFSFLNMFGVLFTVFNLTVVQP). At 26–591 (YPSHIIIKSF…SVFSFMQPLS (566 aa)) the chain is on the extracellular side. Asn190, Asn220, Asn275, Asn333, Asn441, and Asn482 each carry an N-linked (GlcNAc...) asparagine glycan. The helical transmembrane segment at 592 to 612 (TEIWMYIIFAYIGVSVVIFLV) threads the bilayer. At 613–668 (SRFSPYEWRVEETSRGGFTISNDFSVYNCLWFTLAAFMQQGTDILPRSISGRIASS) the chain is on the cytoplasmic side. A helical membrane pass occupies residues 669–689 (AWWFFTMIIVSSYTANLAAFL). Residues 690–855 (TLEKMQAPIE…GSSASLNLSK (166 aa)) are Extracellular-facing. A glycan (N-linked (GlcNAc...) asparagine) is linked at Asn852. Residues 856–876 (VAGIFYILMGGMVISMLAALG) traverse the membrane as a helical segment. The Cytoplasmic portion of the chain corresponds to 877-962 (EFLYRSRIEA…PANTLYNTAV (86 aa)).

It belongs to the glutamate-gated ion channel (TC 1.A.10.1) family. In terms of assembly, interacts with sol-1. Interacts with cni-1; the interaction negatively regulates export of glr-1 from the endoplasmic reticulum to synapses. Interacts with usp-46; the interaction results in deubiquitination of glr-1. Ubiquitinated. Deubiquitinated by usp-46 which prevents its degradation. In terms of processing, glycosylated. In terms of tissue distribution, command interneurons of the locomotory control circuit (AIB, AVA, AVB, AVD, AVE and PVC) and motor neurons (RMD, RIM, SMD, AVG, PVQ and URY).

The protein localises to the postsynaptic cell membrane. The protein resides in the endoplasmic reticulum. It is found in the synapse. It localises to the cell membrane. Its subcellular location is the recycling endosome. The protein localises to the cell projection. The protein resides in the dendrite. It is found in the perikaryon. Its function is as follows. Non-NMDA (N-methyl-D-aspartate) ionotropic glutamate receptor. L-glutamate acts as an excitatory neurotransmitter at many synapses in the central nervous system. The postsynaptic actions of glutamate are mediated by a variety of receptors that are named according to their selective agonists. May contribute to a sensory discrimination between mechanical and chemical stimuli. Plays a role in controlling movement in response to environmental cues such as food availability and mechanosensory stimulation such as the nose touch response. In AIB interneurons, promotes omega turns, a movement that frequently follows backwards locomotion or 'reversals' in response to environmental cues while possibly playing an inhibitory role in alternative neurons to inhibit omega turns. This chain is Glutamate receptor 1, found in Caenorhabditis elegans.